The chain runs to 44 residues: Thioredoxin (44 aa).

One can recognise a Thioredoxin domain in the interval 2–44; sequence IELDKSNFEEEVLKAEGTVLVDFWSPSCEPCKALMPHVHDFEE. An intrachain disulfide couples cysteine 29 to cysteine 32.

The protein belongs to the thioredoxin family.

Its function is as follows. Participates in various redox reactions through the reversible oxidation of its active center dithiol to a disulfide and catalyzes dithiol-disulfide exchange reactions. The polypeptide is Thioredoxin (trxA) (Tissierella creatinophila).